A 102-amino-acid polypeptide reads, in one-letter code: Movement protein (102 aa).

The helical transmembrane segment at 43–63 (VVALIVILFAVGIVYLAYTLF) threads the bilayer. The interval 82-102 (IGFGNTPLRRPGEGNPNGGPV) is disordered.

Belongs to the mastrevirus movement protein family. In terms of assembly, interacts with the capsid protein (CP). Part of a MP-CP-viral DNA complex.

The protein resides in the host membrane. In terms of biological role, involved in the viral transport within, and between cells. The sequence is that of Movement protein from Tobacco yellow dwarf virus (strain Australia) (TYDV).